The following is a 298-amino-acid chain: Acetylglutamate kinase (298 aa).

Substrate is bound by residues 69 to 70, R91, and N196; that span reads GG.

It belongs to the acetylglutamate kinase family. ArgB subfamily.

It is found in the cytoplasm. It carries out the reaction N-acetyl-L-glutamate + ATP = N-acetyl-L-glutamyl 5-phosphate + ADP. It participates in amino-acid biosynthesis; L-arginine biosynthesis; N(2)-acetyl-L-ornithine from L-glutamate: step 2/4. Its function is as follows. Catalyzes the ATP-dependent phosphorylation of N-acetyl-L-glutamate. This chain is Acetylglutamate kinase, found in Rhodopseudomonas palustris (strain BisB18).